The following is a 783-amino-acid chain: Protein involved in starch initiation 1 (783 aa).

The transit peptide at Met1 to Val27 directs the protein to the chloroplast. Coiled coils occupy residues Leu128–Glu309, Leu345–Ala432, and Leu457–Leu512.

In terms of assembly, interacts with PTST2; the interaction is essential for the initiation of starch granules biosynthesis in leaf chloroplasts. Interacts with SS4; the interaction is essential for the initiation of starch granules biosynthesis in leaf chloroplasts.

Its subcellular location is the plastid. It localises to the chloroplast. Required for the initiation of starch granules biosynthesis in leaf chloroplasts. Involved in determining starch granule number and size in chloroplasts. The chain is Protein involved in starch initiation 1 from Arabidopsis thaliana (Mouse-ear cress).